Here is a 459-residue protein sequence, read N- to C-terminus: N-chimaerin (459 aa).

Ala-2 is subject to N-acetylalanine. Residues 49 to 135 form the SH2 domain; that stretch reads EFHGMISREA…IETKAAEYIA (87 aa). Thr-192 bears the Phosphothreonine mark. The Phorbol-ester/DAG-type zinc-finger motif lies at 205-255; that stretch reads IHNFKVHTFRGPHWCEYCANFMWGLIAQGVKCADCGLNVHKQCSKMVPNDC. The region spanning 268–459 is the Rho-GAP domain; sequence CDLTTLVKAH…LLIKNEDILF (192 aa). Thr-340 is modified (phosphothreonine).

In terms of assembly, interacts with EPHA4; effector of EPHA4 in axon guidance linking EPHA4 activation to RAC1 regulation. In terms of processing, phosphorylated. Phosphorylation is EPHA4 kinase activity-dependent. In neurons in brain regions that are involved in learning and memory processes.

Its function is as follows. GTPase-activating protein for p21-rac and a phorbol ester receptor. Involved in the assembly of neuronal locomotor circuits as a direct effector of EPHA4 in axon guidance. In Homo sapiens (Human), this protein is N-chimaerin (CHN1).